The sequence spans 484 residues: Toluene efflux pump outer membrane protein TtgC (484 aa).

The N-terminal stretch at 1–17 is a signal peptide; it reads MTKSLLSLAVTAFILGG. Cys-18 carries N-palmitoyl cysteine lipidation. Residue Cys-18 is the site of S-diacylglycerol cysteine attachment.

The protein belongs to the outer membrane factor (OMF) (TC 1.B.17) family.

The protein localises to the cell outer membrane. Its function is as follows. The outer membrane component of a constitutive organic solvent efflux system. Is involved in export of toluene, styrene, m-xylene, propylbenzene and ethylbenzene. Also exports AMP and the antibiotics carbenicillin, nalidixic acid, chloramphenicol and tetracycline. The sequence is that of Toluene efflux pump outer membrane protein TtgC (ttgC) from Pseudomonas putida (strain DOT-T1E).